The following is a 208-amino-acid chain: Outer-membrane lipoprotein carrier protein (208 aa).

An N-terminal signal peptide occupies residues 1–24; it reads MRMNIVQKILSATCFALLPLLAHA.

It belongs to the LolA family. Monomer.

The protein localises to the periplasm. Functionally, participates in the translocation of lipoproteins from the inner membrane to the outer membrane. Only forms a complex with a lipoprotein if the residue after the N-terminal Cys is not an aspartate (The Asp acts as a targeting signal to indicate that the lipoprotein should stay in the inner membrane). The protein is Outer-membrane lipoprotein carrier protein of Dechloromonas aromatica (strain RCB).